The primary structure comprises 419 residues: ATP-dependent RNA helicase RhlB (419 aa).

The short motif at 9-37 is the Q motif element; the sequence is QRFSDLALHRSVQQAIKEKGFEFCTPIQA. The 178-residue stretch at 40 to 217 folds into the Helicase ATP-binding domain; it reads LPITLKGQDI…FEHMNDPQYV (178 aa). 53–60 serves as a coordination point for ATP; sequence AQTGTGKT. The short motif at 163–166 is the DEAD box element; it reads DEAD. The Helicase C-terminal domain occupies 241–388; that stretch reads KMALLMTLLE…VSQYDAKALI (148 aa).

Belongs to the DEAD box helicase family. RhlB subfamily. In terms of assembly, component of the RNA degradosome, which is a multiprotein complex involved in RNA processing and mRNA degradation.

The protein resides in the cytoplasm. The catalysed reaction is ATP + H2O = ADP + phosphate + H(+). Functionally, DEAD-box RNA helicase involved in RNA degradation. Has RNA-dependent ATPase activity and unwinds double-stranded RNA. This Histophilus somni (strain 129Pt) (Haemophilus somnus) protein is ATP-dependent RNA helicase RhlB.